The following is a 332-amino-acid chain: Ferredoxin--NADP reductase (332 aa).

The FAD site is built by Thr-20, Glu-39, Gln-47, Tyr-52, Val-92, Phe-126, Asp-288, and Ser-329.

Belongs to the ferredoxin--NADP reductase type 2 family. Homodimer. It depends on FAD as a cofactor.

It catalyses the reaction 2 reduced [2Fe-2S]-[ferredoxin] + NADP(+) + H(+) = 2 oxidized [2Fe-2S]-[ferredoxin] + NADPH. This Geobacillus thermodenitrificans (strain NG80-2) protein is Ferredoxin--NADP reductase.